A 245-amino-acid chain; its full sequence is Probable phosphatase YpAngola_A2446 (245 aa).

Positions 7, 9, 15, 40, 73, 101, 131, 192, and 194 each coordinate Zn(2+).

The protein belongs to the PHP family. Homotrimer. It depends on Zn(2+) as a cofactor.

The protein is Probable phosphatase YpAngola_A2446 of Yersinia pestis bv. Antiqua (strain Angola).